Consider the following 652-residue polypeptide: DNA ligase (652 aa).

NAD(+)-binding positions include 29–33 (DQEYD), 78–79 (SL), and Glu107. Lys109 acts as the N6-AMP-lysine intermediate in catalysis. Arg130, Glu164, Lys278, and Lys302 together coordinate NAD(+). Residues Cys395, Cys398, Cys413, and Cys418 each coordinate Zn(2+). Residues 577–652 (DTSAQLFGLT…VKDENWLLQL (76 aa)) enclose the BRCT domain.

This sequence belongs to the NAD-dependent DNA ligase family. LigA subfamily. It depends on Mg(2+) as a cofactor. Mn(2+) serves as cofactor.

The catalysed reaction is NAD(+) + (deoxyribonucleotide)n-3'-hydroxyl + 5'-phospho-(deoxyribonucleotide)m = (deoxyribonucleotide)n+m + AMP + beta-nicotinamide D-nucleotide.. In terms of biological role, DNA ligase that catalyzes the formation of phosphodiester linkages between 5'-phosphoryl and 3'-hydroxyl groups in double-stranded DNA using NAD as a coenzyme and as the energy source for the reaction. It is essential for DNA replication and repair of damaged DNA. This Streptococcus uberis (strain ATCC BAA-854 / 0140J) protein is DNA ligase.